The sequence spans 1067 residues: Chitinase-like protein C25A8.4 (1067 aa).

Residues 1–18 form the signal peptide; the sequence is MGIKTLIWLSILVVGIYC. GH18 domains lie at 26–364, 372–727, and 743–1067; these read PVHY…IRNT, CTRL…QVCQ, and FVVS…HKCR. An intrachain disulfide couples Cys30 to Cys51. N-linked (GlcNAc...) asparagine glycosylation is found at Asn47 and Asn216. Cys376 and Cys397 are oxidised to a cystine. N-linked (GlcNAc...) asparagine glycosylation is found at Asn475, Asn538, and Asn710. A disulfide bridge links Cys747 with Cys768. N-linked (GlcNAc...) asparagine glycans are attached at residues Asn797 and Asn830. Glu855 (proton donor) is an active-site residue. Asn887, Asn933, and Asn1010 each carry an N-linked (GlcNAc...) asparagine glycan.

The protein belongs to the glycosyl hydrolase 18 family.

The protein resides in the secreted. Its function is as follows. Putative chitinase. This Caenorhabditis elegans protein is Chitinase-like protein C25A8.4 (cht-3).